The following is a 315-amino-acid chain: Tetraacyldisaccharide 4'-kinase (315 aa).

An ATP-binding site is contributed by threonine 52–threonine 59.

It belongs to the LpxK family.

The catalysed reaction is a lipid A disaccharide + ATP = a lipid IVA + ADP + H(+). It functions in the pathway glycolipid biosynthesis; lipid IV(A) biosynthesis; lipid IV(A) from (3R)-3-hydroxytetradecanoyl-[acyl-carrier-protein] and UDP-N-acetyl-alpha-D-glucosamine: step 6/6. Transfers the gamma-phosphate of ATP to the 4'-position of a tetraacyldisaccharide 1-phosphate intermediate (termed DS-1-P) to form tetraacyldisaccharide 1,4'-bis-phosphate (lipid IVA). The polypeptide is Tetraacyldisaccharide 4'-kinase (Ruthia magnifica subsp. Calyptogena magnifica).